The following is a 519-amino-acid chain: 2-isopropylmalate synthase (519 aa).

Residues 5-267 (VIIFDTTLRD…TTNVNPMEIS (263 aa)) form the Pyruvate carboxyltransferase domain. Mn(2+) contacts are provided by D14, H202, H204, and N238. Residues 392–519 (RLESINVQSG…KEQLIHIDQV (128 aa)) form a regulatory domain region.

It belongs to the alpha-IPM synthase/homocitrate synthase family. LeuA type 1 subfamily. As to quaternary structure, homodimer. Mn(2+) serves as cofactor.

The protein localises to the cytoplasm. It carries out the reaction 3-methyl-2-oxobutanoate + acetyl-CoA + H2O = (2S)-2-isopropylmalate + CoA + H(+). The protein operates within amino-acid biosynthesis; L-leucine biosynthesis; L-leucine from 3-methyl-2-oxobutanoate: step 1/4. Catalyzes the condensation of the acetyl group of acetyl-CoA with 3-methyl-2-oxobutanoate (2-ketoisovalerate) to form 3-carboxy-3-hydroxy-4-methylpentanoate (2-isopropylmalate). The chain is 2-isopropylmalate synthase from Psychromonas ingrahamii (strain DSM 17664 / CCUG 51855 / 37).